A 364-amino-acid chain; its full sequence is D-alanine--D-alanine ligase (364 aa).

The region spanning 145 to 354 is the ATP-grasp domain; the sequence is KMAFEQAGLP…FPELVDKLVQ (210 aa). 181–236 lines the ATP pocket; that stretch reads EASLGYPCFVKPANLGSSVGISKVRSRQELEDALDNAANYDRRIIIEAGVAAREVE. Asp-307, Glu-321, and Asn-323 together coordinate Mg(2+).

The protein belongs to the D-alanine--D-alanine ligase family. Requires Mg(2+) as cofactor. Mn(2+) is required as a cofactor.

The protein resides in the cytoplasm. The enzyme catalyses 2 D-alanine + ATP = D-alanyl-D-alanine + ADP + phosphate + H(+). The protein operates within cell wall biogenesis; peptidoglycan biosynthesis. Functionally, cell wall formation. The sequence is that of D-alanine--D-alanine ligase from Nostoc sp. (strain PCC 7120 / SAG 25.82 / UTEX 2576).